The following is a 599-amino-acid chain: Glutamine--fructose-6-phosphate aminotransferase [isomerizing] (599 aa).

Residue C2 is the Nucleophile; for GATase activity of the active site. The region spanning C2 to E223 is the Glutamine amidotransferase type-2 domain. 2 SIS domains span residues L286–K423 and I452–P589. K594 serves as the catalytic For Fru-6P isomerization activity.

As to quaternary structure, homodimer.

It localises to the cytoplasm. It carries out the reaction D-fructose 6-phosphate + L-glutamine = D-glucosamine 6-phosphate + L-glutamate. Catalyzes the first step in hexosamine metabolism, converting fructose-6P into glucosamine-6P using glutamine as a nitrogen source. This Methanococcus maripaludis (strain DSM 14266 / JCM 13030 / NBRC 101832 / S2 / LL) protein is Glutamine--fructose-6-phosphate aminotransferase [isomerizing] (glmS).